We begin with the raw amino-acid sequence, 843 residues long: Protein P (843 aa).

Positions 1-177 (MPLSYPHFRK…FCGSPYSWEQ (177 aa)) are terminal protein domain (TP). The interval 178–346 (ELQHGSTSIN…YCLSHIINLL (169 aa)) is spacer. Disordered regions lie at residues 180-221 (QHGS…FQQS) and 282-313 (REKT…GSVR). The segment covering 196 to 221 (SLCTQSSGILSRPSAGSSIQGKFQQS) has biased composition (polar residues). Positions 347-690 (EDWGPCYEHG…YMHLYPVARQ (344 aa)) are polymerase/reverse transcriptase domain (RT). In terms of domain architecture, Reverse transcriptase spans 357-600 (QHHIRTPRTP…YTLNFMGYVI (244 aa)). Residues aspartate 429, aspartate 551, and aspartate 552 each contribute to the Mg(2+) site.

This sequence belongs to the hepadnaviridae P protein family.

It catalyses the reaction DNA(n) + a 2'-deoxyribonucleoside 5'-triphosphate = DNA(n+1) + diphosphate. The catalysed reaction is Endonucleolytic cleavage to 5'-phosphomonoester.. With respect to regulation, activated by host HSP70 and HSP40 in vitro to be able to bind the epsilon loop of the pgRNA. Because deletion of the RNase H region renders the protein partly chaperone-independent, the chaperones may be needed indirectly to relieve occlusion of the RNA-binding site by this domain. Inhibited by several reverse-transcriptase inhibitors: Lamivudine, Adefovir and Entecavir. In terms of biological role, multifunctional enzyme that converts the viral RNA genome into dsDNA in viral cytoplasmic capsids. This enzyme displays a DNA polymerase activity that can copy either DNA or RNA templates, and a ribonuclease H (RNase H) activity that cleaves the RNA strand of RNA-DNA heteroduplexes in a partially processive 3'- to 5'-endonucleasic mode. Neo-synthesized pregenomic RNA (pgRNA) are encapsidated together with the P protein, and reverse-transcribed inside the nucleocapsid. Initiation of reverse-transcription occurs first by binding the epsilon loop on the pgRNA genome, and is initiated by protein priming, thereby the 5'-end of (-)DNA is covalently linked to P protein. Partial (+)DNA is synthesized from the (-)DNA template and generates the relaxed circular DNA (RC-DNA) genome. After budding and infection, the RC-DNA migrates in the nucleus, and is converted into a plasmid-like covalently closed circular DNA (cccDNA). The activity of P protein does not seem to be necessary for cccDNA generation, and is presumably released from (+)DNA by host nuclear DNA repair machinery. This chain is Protein P, found in Homo sapiens (Human).